Here is an 840-residue protein sequence, read N- to C-terminus: Phosphatidylglycerol lysyltransferase (840 aa).

The Cytoplasmic segment spans residues 1 to 8 (MTQELKSK). A helical membrane pass occupies residues 9–29 (LLSFFKFIFATALFIFVIFTL). At 30 to 52 (YRELSHINFKETFIQFGKINRLW) the chain is on the extracellular side. Residues 53–73 (LVLLFAGGGLSLILLSLYDII) form a helical membrane-spanning segment. The Cytoplasmic segment spans residues 74-89 (LVKALKLKMPLIRVFR). A helical transmembrane segment spans residues 90 to 110 (VSYIINALNSIIGFGGFIGAG). Over 111-129 (VRAFVYKNYTNDTKKLVQY) the chain is Extracellular. Residues 130–150 (ISIILVSMLTGLSLLSILVVL) traverse the membrane as a helical segment. Residues 151-161 (RIFNASHMIDE) lie on the Cytoplasmic side of the membrane. The chain crosses the membrane as a helical span at residues 162–182 (ISWVRWILYIVALFLPIFIFY). The Extracellular portion of the chain corresponds to 183–200 (TVARPVDRNNRYMGVYCT). The helical transmembrane segment at 201 to 221 (VVSCVEWMAAATVLYFAALIV) threads the bilayer. Residues 222–229 (DIHISFMT) are Cytoplasmic-facing. A helical membrane pass occupies residues 230–250 (FVGIFVIAALSGLVSFIPGGF). Topologically, residues 251 to 270 (GAFDLVVLLGLKSLGISEEK) are extracellular. Residues 271–291 (ILLALVLYRFAYYFVPVMIAL) form a helical membrane-spanning segment. Topologically, residues 292 to 337 (ILSSFEFGNTAKKYLDNSKYFIPVKDFTSFLRSYQKDILAKVPSFS) are cytoplasmic. A helical transmembrane segment spans residues 338–358 (LAILIFLTSIIFFINNLTIVY). The Extracellular portion of the chain corresponds to 359–366 (DGLYDGNH). A helical transmembrane segment spans residues 367–387 (FAYYIALAVQTSACLLLILNV). The Cytoplasmic segment spans residues 388 to 392 (RGIYK). Residues 393–413 (GSRRAIIYAFISIILIASATI) traverse the membrane as a helical segment. The Extracellular segment spans residues 414–415 (YT). Residues 416–436 (YASFLLLSWLIIIFVLLILAY) traverse the membrane as a helical segment. Residues 437-450 (QRAQVLKRPLRFKK) lie on the Cytoplasmic side of the membrane. The helical transmembrane segment at 451–471 (LAVMLLLSIFILYLNHILISG) threads the bilayer. Residues 472-489 (TLYALDVYHIEIDTSLLR) are Extracellular-facing. The chain crosses the membrane as a helical span at residues 490–510 (YYFWMTIVIIMLLVGVIAWLF). Residues 511–840 (DYKYKCPHHS…LKVMRVIRHK (330 aa)) are Cytoplasmic-facing.

Belongs to the LPG synthase family.

Its subcellular location is the cell membrane. It carries out the reaction L-lysyl-tRNA(Lys) + a 1,2-diacyl-sn-glycero-3-phospho-(1'-sn-glycerol) = a 1,2-diacyl-sn-glycero-3-phospho-1'-(3'-O-L-lysyl)-sn-glycerol + tRNA(Lys). Catalyzes the transfer of a lysyl group from L-lysyl-tRNA(Lys) to membrane-bound phosphatidylglycerol (PG), which produces lysylphosphatidylglycerol (LPG), a major component of the bacterial membrane with a positive net charge. LPG synthesis contributes to bacterial virulence as it is involved in the resistance mechanism against cationic antimicrobial peptides (CAMP) produces by the host's immune system (defensins, cathelicidins) and by the competing microorganisms (bacteriocins). In fact, the modification of anionic phosphatidylglycerol with positively charged L-lysine results in repulsion of the peptides. This is Phosphatidylglycerol lysyltransferase (mprF) from Staphylococcus epidermidis (strain ATCC 12228 / FDA PCI 1200).